We begin with the raw amino-acid sequence, 852 residues long: Protein SEY1 (852 aa).

Topologically, residues 1–738 are cytoplasmic; sequence MNGHFAAVGN…KRSAIGGITQ (738 aa). The GB1/RHD3-type G domain occupies 47-283; that stretch reads GFNYHLISVF…FVGGVFLPEY (237 aa). Residue 57 to 64 participates in GTP binding; the sequence is GSQSTGKS. Residues 475–500 adopt a coiled-coil conformation; sequence QYRLFEKELDEVSARLRKEEMRRLAI. The helical transmembrane segment at 739-759 threads the bilayer; the sequence is VPLYFYIVLLIFGWNEIVMVL. The Lumenal segment spans residues 760-762; that stretch reads RNP. A helical transmembrane segment spans residues 763 to 783; it reads MLFMLLLVMGGGTYVAYTLNL. The Cytoplasmic segment spans residues 784-852; that stretch reads LGPMMQMANA…AQEVEEDDDI (69 aa). The disordered stretch occupies residues 825–852; sequence RSQDNGIGMDRLDSRGKKAQEVEEDDDI. A compositionally biased stretch (basic and acidic residues) spans 834–845; sequence DRLDSRGKKAQE.

This sequence belongs to the TRAFAC class dynamin-like GTPase superfamily. GB1/RHD3 GTPase family. RHD3 subfamily.

Its subcellular location is the endoplasmic reticulum membrane. Functionally, cooperates with the reticulon proteins and tubule-shaping DP1 family proteins to generate and maintain the structure of the tubular endoplasmic reticulum network. Has GTPase activity, which is required for its function in ER organization. This is Protein SEY1 from Chaetomium globosum (strain ATCC 6205 / CBS 148.51 / DSM 1962 / NBRC 6347 / NRRL 1970) (Soil fungus).